A 260-amino-acid chain; its full sequence is Adenosylcobinamide-GDP ribazoletransferase (260 aa).

A run of 8 helical transmembrane segments spans residues 3–23, 36–56, 60–80, 108–128, 133–153, 180–200, 206–226, and 239–259; these read APLWLRDLAGAWIFYSVLPAW, FAPWIGLVLGGLQSFLWLVLI, WPTSAVALLVIGLGAWLSGGL, VGASGVQALLVVVLLQIAALL, LAPLALLIAAFWGRCAPLWAM, ALPAFLVLLLALTVVPLLMIV, MVLMAGIGVGVLPAFLVPELL, and GASVVLVETITLLLLAVLLTA.

The protein belongs to the CobS family. The cofactor is Mg(2+).

It localises to the cell inner membrane. The catalysed reaction is alpha-ribazole + adenosylcob(III)inamide-GDP = adenosylcob(III)alamin + GMP + H(+). It catalyses the reaction alpha-ribazole 5'-phosphate + adenosylcob(III)inamide-GDP = adenosylcob(III)alamin 5'-phosphate + GMP + H(+). It participates in cofactor biosynthesis; adenosylcobalamin biosynthesis; adenosylcobalamin from cob(II)yrinate a,c-diamide: step 7/7. Joins adenosylcobinamide-GDP and alpha-ribazole to generate adenosylcobalamin (Ado-cobalamin). Also synthesizes adenosylcobalamin 5'-phosphate from adenosylcobinamide-GDP and alpha-ribazole 5'-phosphate. The chain is Adenosylcobinamide-GDP ribazoletransferase from Prochlorococcus marinus (strain MIT 9303).